A 282-amino-acid polypeptide reads, in one-letter code: Ribosomal RNA small subunit methyltransferase A (282 aa).

Residues histidine 15, leucine 17, glycine 42, glutamate 64, aspartate 89, and asparagine 109 each coordinate S-adenosyl-L-methionine.

This sequence belongs to the class I-like SAM-binding methyltransferase superfamily. rRNA adenine N(6)-methyltransferase family. RsmA subfamily.

It localises to the cytoplasm. The catalysed reaction is adenosine(1518)/adenosine(1519) in 16S rRNA + 4 S-adenosyl-L-methionine = N(6)-dimethyladenosine(1518)/N(6)-dimethyladenosine(1519) in 16S rRNA + 4 S-adenosyl-L-homocysteine + 4 H(+). Functionally, specifically dimethylates two adjacent adenosines (A1518 and A1519) in the loop of a conserved hairpin near the 3'-end of 16S rRNA in the 30S particle. May play a critical role in biogenesis of 30S subunits. This Prochlorococcus marinus (strain MIT 9211) protein is Ribosomal RNA small subunit methyltransferase A.